The chain runs to 477 residues: PTS system MurNAc-GlcNAc-specific EIIBC component (477 aa).

The 83-residue stretch at 5–87 (QQLAHHILDA…VKLSGVQLGE (83 aa)) folds into the PTS EIIB type-1 domain. Cysteine 27 (phosphocysteine intermediate; for EIIB activity) is an active-site residue. The interval 91 to 113 (HRSNTSNIKNQAQQNKREFQQKR) is disordered. The span at 92-104 (RSNTSNIKNQAQQ) shows a compositional bias: polar residues. One can recognise a PTS EIIC type-1 domain in the interval 123 to 477 (KSIANIFIPL…EMRNLNKLGD (355 aa)). 10 helical membrane passes run 128 to 148 (IFIP…IAAV), 167 to 187 (VAVL…FTGF), 192 to 212 (VFGA…LTGI), 227 to 247 (LIAG…LSII), 267 to 287 (ISLL…AGFI), 298 to 318 (VIGV…LPLV), 342 to 362 (LLPI…ALWV), 377 to 397 (ALPV…TLPL), 401 to 421 (FITA…IGHI), and 443 to 463 (LGYI…TYFF).

It localises to the cell membrane. The enzyme catalyses N-acetyl-beta-D-muramate-(1-&gt;4)-N-acetyl-D-glucosamine(out) + N(pros)-phospho-L-histidyl-[protein] = 6-phospho-N-acetyl-beta-D-muramate-(1-&gt;4)-N-acetyl-D-glucosamine(in) + L-histidyl-[protein]. The protein operates within cell wall biogenesis; peptidoglycan recycling. Functionally, the phosphoenolpyruvate-dependent sugar phosphotransferase system (sugar PTS), a major carbohydrate active transport system, catalyzes the phosphorylation of incoming sugar substrates concomitantly with their translocation across the cell membrane. This system is involved in the uptake and phosphorylation of MurNAc-GlcNAc, the principle peptidoglycan turnover product of S.aureus, yielding cytoplasmic MurNAc 6P-GlcNAc. In Staphylococcus haemolyticus (strain JCSC1435), this protein is PTS system MurNAc-GlcNAc-specific EIIBC component.